The primary structure comprises 673 residues: L-type lectin-domain containing receptor kinase SIT2 (673 aa).

Residues 1-27 (MVLPKPEMPFFVLLLFLGLGCLRPAAA) form the signal peptide. Over 28–296 (TDERFVFNGF…FPKPRSKTLE (269 aa)) the chain is Extracellular. The interval 32-270 (FVFNGFTGAN…VLGWSFKMNG (239 aa)) is legume-lectin like. N-linked (GlcNAc...) asparagine glycosylation is found at N41, N60, N82, N118, N138, N191, N214, N235, and N276. A helical membrane pass occupies residues 297 to 317 (IVLPIASAVLVFAVAAAVFVF). Over 318-673 (MRRRRMFSEL…GTFSDLSGGR (356 aa)) the chain is Cytoplasmic. The region spanning 352–631 (FSDKRLLGIG…LEGDVPLPEL (280 aa)) is the Protein kinase domain. ATP-binding positions include 358 to 366 (LGIGGFGRV) and K381. D477 serves as the catalytic Proton acceptor.

It in the C-terminal section; belongs to the protein kinase superfamily. Ser/Thr protein kinase family. This sequence in the N-terminal section; belongs to the leguminous lectin family. In terms of tissue distribution, mainly expressed in root epidermal cells.

The protein resides in the cell membrane. The catalysed reaction is L-seryl-[protein] + ATP = O-phospho-L-seryl-[protein] + ADP + H(+). The enzyme catalyses L-threonyl-[protein] + ATP = O-phospho-L-threonyl-[protein] + ADP + H(+). Functionally, lectin-domain containing receptor kinase involved in salt stress response. Acts as a negative regulator of salt tolerance. This Oryza sativa subsp. japonica (Rice) protein is L-type lectin-domain containing receptor kinase SIT2.